The following is a 316-amino-acid chain: Porphobilinogen deaminase (316 aa).

Residue Cys245 is modified to S-(dipyrrolylmethanemethyl)cysteine.

The protein belongs to the HMBS family. In terms of assembly, monomer. It depends on dipyrromethane as a cofactor.

The enzyme catalyses 4 porphobilinogen + H2O = hydroxymethylbilane + 4 NH4(+). It functions in the pathway porphyrin-containing compound metabolism; protoporphyrin-IX biosynthesis; coproporphyrinogen-III from 5-aminolevulinate: step 2/4. It participates in porphyrin-containing compound metabolism; chlorophyll biosynthesis. In terms of biological role, tetrapolymerization of the monopyrrole PBG into the hydroxymethylbilane pre-uroporphyrinogen in several discrete steps. The polypeptide is Porphobilinogen deaminase (Prochlorococcus marinus (strain MIT 9312)).